Consider the following 533-residue polypeptide: Berberine bridge enzyme-like 28 (533 aa).

A signal peptide spans 1 to 23; sequence MEFSSFLFTILLFSLNISPLVSA. A disulfide bridge connects residues Cys-34 and Cys-96. The 176-residue stretch at 74 to 249 folds into the FAD-binding PCMH-type domain; it reads ETPKPVSIIT…LSWKVKLVDV (176 aa). Position 111 is a pros-8alpha-FAD histidine (His-111). Asn-142 and Asn-440 each carry an N-linked (GlcNAc...) asparagine glycan.

The protein belongs to the oxygen-dependent FAD-linked oxidoreductase family. Requires FAD as cofactor.

The protein resides in the secreted. It localises to the cell wall. In terms of biological role, involved in adaptation to salt stress. This chain is Berberine bridge enzyme-like 28, found in Arabidopsis thaliana (Mouse-ear cress).